Here is a 195-residue protein sequence, read N- to C-terminus: Imidazoleglycerol-phosphate dehydratase (195 aa).

This sequence belongs to the imidazoleglycerol-phosphate dehydratase family.

It localises to the cytoplasm. The catalysed reaction is D-erythro-1-(imidazol-4-yl)glycerol 3-phosphate = 3-(imidazol-4-yl)-2-oxopropyl phosphate + H2O. It participates in amino-acid biosynthesis; L-histidine biosynthesis; L-histidine from 5-phospho-alpha-D-ribose 1-diphosphate: step 6/9. In Deinococcus deserti (strain DSM 17065 / CIP 109153 / LMG 22923 / VCD115), this protein is Imidazoleglycerol-phosphate dehydratase.